The following is a 309-amino-acid chain: Golgi to ER traffic protein 4 homolog (309 aa).

The interval S290–D309 is disordered.

Belongs to the GET4 family.

May play a role in insertion of tail-anchored proteins into the endoplasmic reticulum membrane. The chain is Golgi to ER traffic protein 4 homolog from Dictyostelium discoideum (Social amoeba).